Reading from the N-terminus, the 351-residue chain is Aromatic amino acid aminotransferase (351 aa).

An N6-(pyridoxal phosphate)lysine modification is found at Lys-215.

It belongs to the class-II pyridoxal-phosphate-dependent aminotransferase family. Homodimer. Pyridoxal 5'-phosphate is required as a cofactor.

It catalyses the reaction an aromatic L-alpha-amino acid + 2-oxoglutarate = an aromatic oxo-acid + L-glutamate. Functionally, aminotransferase that catalyzes the conversion of aromatic amino acids and 2-oxoglutarate into corresponding aromatic oxo acids and L-glutamate. This Mycolicibacterium vanbaalenii (strain DSM 7251 / JCM 13017 / BCRC 16820 / KCTC 9966 / NRRL B-24157 / PYR-1) (Mycobacterium vanbaalenii) protein is Aromatic amino acid aminotransferase.